The primary structure comprises 177 residues: Small ribosomal subunit protein eS10z (177 aa).

The disordered stretch occupies residues 90–177 (TLKKSAKPGG…AAAPSGSGFP (88 aa)). Residues 108–140 (DRQRGPPRSDGDRPRFGDRDGYRGGPRGGDEKG) are compositionally biased toward basic and acidic residues. Residues 141–150 (GAPADFQPSF) show a composition bias toward low complexity. Over residues 151–165 (QGGGGRPGFGRGAGG) the composition is skewed to gly residues. Positions 166 to 177 (YSAAAPSGSGFP) are enriched in low complexity.

This sequence belongs to the eukaryotic ribosomal protein eS10 family.

It localises to the cytoplasm. The sequence is that of Small ribosomal subunit protein eS10z (RPS10A) from Arabidopsis thaliana (Mouse-ear cress).